Here is a 382-residue protein sequence, read N- to C-terminus: ATP phosphoribosyltransferase regulatory subunit (382 aa).

This sequence belongs to the class-II aminoacyl-tRNA synthetase family. HisZ subfamily. In terms of assembly, heteromultimer composed of HisG and HisZ subunits.

It localises to the cytoplasm. It functions in the pathway amino-acid biosynthesis; L-histidine biosynthesis; L-histidine from 5-phospho-alpha-D-ribose 1-diphosphate: step 1/9. Required for the first step of histidine biosynthesis. May allow the feedback regulation of ATP phosphoribosyltransferase activity by histidine. The sequence is that of ATP phosphoribosyltransferase regulatory subunit from Burkholderia cenocepacia (strain HI2424).